Here is a 230-residue protein sequence, read N- to C-terminus: MDPDTVKSTLSNLAFGNVLAAAARDYKKEVLANEKAQGSRPVNEEVDLDELMDDPELEKLHADRIAALRREVEKREAFKRQGHGEYREVSEGDFLGEVTRSEKVICHFYHKEFYRCKIMDKHLKTLAPRHVDTKFIKMDAENAPFFVTKLAIKTLPCVILFSKGIAMDRLVGFQDLGAKDDFSTTKLENLLVKKGMLSEKRKEEDEEDYEYQESIRRSVRSSANVDSDSD.

Positions 89–173 (VSEGDFLGEV…GIAMDRLVGF (85 aa)) constitute a Thioredoxin domain. The tract at residues 199–230 (EKRKEEDEEDYEYQESIRRSVRSSANVDSDSD) is disordered. Over residues 220-230 (RSSANVDSDSD) the composition is skewed to polar residues.

The protein belongs to the phosducin family. Interacts with TUBB2, TUBB3, TUBB4 and TUBB5. In terms of tissue distribution, expressed in roots, cotyledons, leaves, stems and flowers.

It localises to the cytoplasm. Its subcellular location is the nucleus. Tubulin-binding protein involved in microtubule formation. This chain is Thioredoxin domain-containing protein PLP3B (PLP3B), found in Arabidopsis thaliana (Mouse-ear cress).